Here is an 89-residue protein sequence, read N- to C-terminus: Small ribosomal subunit protein uS15 (89 aa).

It belongs to the universal ribosomal protein uS15 family. As to quaternary structure, part of the 30S ribosomal subunit. Forms a bridge to the 50S subunit in the 70S ribosome, contacting the 23S rRNA.

Its function is as follows. One of the primary rRNA binding proteins, it binds directly to 16S rRNA where it helps nucleate assembly of the platform of the 30S subunit by binding and bridging several RNA helices of the 16S rRNA. In terms of biological role, forms an intersubunit bridge (bridge B4) with the 23S rRNA of the 50S subunit in the ribosome. The chain is Small ribosomal subunit protein uS15 from Shewanella denitrificans (strain OS217 / ATCC BAA-1090 / DSM 15013).